The sequence spans 224 residues: UPF0758 protein PD_0117 (224 aa).

The 123-residue stretch at 102-224 folds into the MPN domain; it reads SIHDPISAGR…PVSFAEHGWL (123 aa). Zn(2+) contacts are provided by His-173, His-175, and Asp-186. The short motif at 173-186 is the JAMM motif element; it reads HNHPSGNREPSPAD.

This sequence belongs to the UPF0758 family.

The sequence is that of UPF0758 protein PD_0117 from Xylella fastidiosa (strain Temecula1 / ATCC 700964).